We begin with the raw amino-acid sequence, 126 residues long: CD59 glycoprotein (126 aa).

The signal sequence occupies residues 1–25 (MGIQGGSVLFGLLLALAVFCHSGHS). In terms of domain architecture, UPAR/Ly6 spans 26-106 (LQCYNCPNPT…QLENGGTSLS (81 aa)). Cystine bridges form between Cys28/Cys51, Cys31/Cys38, Cys44/Cys64, Cys70/Cys88, and Cys89/Cys94. N-linked (GlcNAc...) asparagine glycosylation is present at Asn43. Residue Asn100 is the site of GPI-anchor amidated asparagine attachment. Residues 101-126 (GGTSLSEKTVLLLVTPLLAAAWCLHP) constitute a propeptide, removed in mature form.

As to quaternary structure, interacts with T-cell surface antigen CD2. Post-translationally, N- and O-glycosylated.

Its subcellular location is the cell membrane. It is found in the secreted. Functionally, potent inhibitor of the complement membrane attack complex (MAC) action, which protects self-cells from damage during complement activation. Acts by binding to the beta-haipins of C8 (C8A and C8B) components of the assembling MAC, forming an intermolecular beta-sheet that prevents incorporation of the multiple copies of C9 required for complete formation of the osmolytic pore. In Papio sp. (Baboon), this protein is CD59 glycoprotein.